A 224-amino-acid chain; its full sequence is Phosphoglycolate phosphatase (224 aa).

The active-site Nucleophile is the Asp-11. Mg(2+) is bound by residues Asp-11, Asp-13, and Asp-177.

It belongs to the HAD-like hydrolase superfamily. CbbY/CbbZ/Gph/YieH family. The cofactor is Mg(2+).

The catalysed reaction is 2-phosphoglycolate + H2O = glycolate + phosphate. Its pathway is organic acid metabolism; glycolate biosynthesis; glycolate from 2-phosphoglycolate: step 1/1. In terms of biological role, specifically catalyzes the dephosphorylation of 2-phosphoglycolate. Is involved in the dissimilation of the intracellular 2-phosphoglycolate formed during the DNA repair of 3'-phosphoglycolate ends, a major class of DNA lesions induced by oxidative stress. This is Phosphoglycolate phosphatase from Haemophilus influenzae (strain 86-028NP).